The sequence spans 504 residues: Cytochrome P450 71B7 (504 aa).

Residues 1–21 (MSILLCFLCLLPVFLVSLSIL) form a helical membrane-spanning segment. Lys82 is covalently cross-linked (Glycyl lysine isopeptide (Lys-Gly) (interchain with G-Cter in ubiquitin)). Cys446 is a binding site for heme.

The protein belongs to the cytochrome P450 family. Requires heme as cofactor. In terms of tissue distribution, highly expressed in rosette leaves. Also expressed in roots, leaves, flowers, and siliques.

It is found in the membrane. This is Cytochrome P450 71B7 (CYP71B7) from Arabidopsis thaliana (Mouse-ear cress).